The primary structure comprises 309 residues: Olfactory receptor 5AK2 (309 aa).

Over 1–25 the chain is Extracellular; it reads MTLGNSTEVTEFYLLGFGAQHEFWC. An N-linked (GlcNAc...) asparagine glycan is attached at Asn-5. Residues 26 to 46 form a helical membrane-spanning segment; the sequence is ILFIVFLLIYVTSIMGNSGII. Topologically, residues 47–54 are cytoplasmic; the sequence is LLINTDSR. The helical transmembrane segment at 55-75 threads the bilayer; it reads FQTLTYFFLQHLAFVDICYTS. The Extracellular portion of the chain corresponds to 76–99; it reads AITPKMLQSFTEEKNLMLFQGCVI. Cys-97 and Cys-189 form a disulfide bridge. A helical membrane pass occupies residues 100-120; sequence QFLVYATFATSDCYLLAMMAV. The Cytoplasmic portion of the chain corresponds to 121-133; that stretch reads DPYVAICKPLHYT. The helical transmembrane segment at 134 to 154 threads the bilayer; that stretch reads VIMSRTVCIRLVAGSYIMGSI. Asn-155 is a glycosylation site (N-linked (GlcNAc...) asparagine). At 155 to 196 the chain is on the extracellular side; that stretch reads NASVQTGFTCSLSFCKSNSINHFFCDVPPILALSCSNVDINI. The helical transmembrane segment at 197 to 217 threads the bilayer; sequence MLLVVFVGSNLIFTGLVVIFS. At 218–237 the chain is on the cytoplasmic side; sequence YIYIMATILKMSSSAGRKKS. The chain crosses the membrane as a helical span at residues 238–258; the sequence is FSTCASHLTAVTIFYGTLSYM. The Extracellular segment spans residues 259 to 271; that stretch reads YLQSHSNNSQENM. An N-linked (GlcNAc...) asparagine glycan is attached at Asn-265. A helical transmembrane segment spans residues 272–292; that stretch reads KVAFIFYGTVIPMLNPLIYSL. Over 293-309 the chain is Cytoplasmic; sequence RNKEVKEALKVIGKKLF.

This sequence belongs to the G-protein coupled receptor 1 family.

It localises to the cell membrane. In terms of biological role, odorant receptor. The sequence is that of Olfactory receptor 5AK2 (OR5AK2) from Homo sapiens (Human).